We begin with the raw amino-acid sequence, 209 residues long: Large ribosomal subunit protein uL3 (209 aa).

The disordered stretch occupies residues 128–154 (QQRGPMTHGSKFHRAPGSMGASSDPSR).

The protein belongs to the universal ribosomal protein uL3 family. Part of the 50S ribosomal subunit. Forms a cluster with proteins L14 and L19.

One of the primary rRNA binding proteins, it binds directly near the 3'-end of the 23S rRNA, where it nucleates assembly of the 50S subunit. The protein is Large ribosomal subunit protein uL3 of Clostridium beijerinckii (strain ATCC 51743 / NCIMB 8052) (Clostridium acetobutylicum).